The primary structure comprises 309 residues: Tagatose-6-phosphate kinase (309 aa).

Belongs to the carbohydrate kinase PfkB family. LacC subfamily.

The enzyme catalyses D-tagatofuranose 6-phosphate + ATP = D-tagatofuranose 1,6-bisphosphate + ADP + H(+). It participates in carbohydrate metabolism; D-tagatose 6-phosphate degradation; D-glyceraldehyde 3-phosphate and glycerone phosphate from D-tagatose 6-phosphate: step 1/2. The protein is Tagatose-6-phosphate kinase of Streptococcus pyogenes serotype M5 (strain Manfredo).